Consider the following 351-residue polypeptide: MAISAAIGTPLETCLAQAVDANPALKDAAAVVAAVGRSAVEISERIGRGALGGDLAAAGDHNSDGDVQKALDVIAHESVTAALRGAPVAEVASEEAEEVMRLNPDAPLAVAIDPLDGSSNIGVNMAVGMIFGIRPSIKDPANPLASFTTPGSTQIAAGFVTYGPATALILTLGEGTQSYVLDRTEGRFKLTSPAMSVPPSTKEFAINASNARHWDAPVKAYIEDCQRGTEGPRDKDYNMRWLASLVADIQRVLTRGGVFLYPGDARKNYARGRLRLLYEVAPVAMLVEQAGGAATDGQTRILDIVANGIHERAPLVCGSTEEVTCVATYYAGGKPDAGRSPLFGQRGLMRS.

The Mg(2+) site is built by Glu-94, Asp-113, Leu-115, and Asp-116. Residues 116 to 119 (DGSS) and Asn-207 each bind substrate. Glu-279 contributes to the Mg(2+) binding site.

It belongs to the FBPase class 1 family. As to quaternary structure, homotetramer. Requires Mg(2+) as cofactor.

The protein resides in the cytoplasm. The catalysed reaction is beta-D-fructose 1,6-bisphosphate + H2O = beta-D-fructose 6-phosphate + phosphate. It participates in carbohydrate biosynthesis; gluconeogenesis. This Methylobacterium radiotolerans (strain ATCC 27329 / DSM 1819 / JCM 2831 / NBRC 15690 / NCIMB 10815 / 0-1) protein is Fructose-1,6-bisphosphatase class 1.